The sequence spans 56 residues: Small integral membrane protein 39 (56 aa).

A helical transmembrane segment spans residues 33–53 (VVVSAVLALLVLINVVLIFLL).

It localises to the membrane. The chain is Small integral membrane protein 39 from Homo sapiens (Human).